A 1171-amino-acid polypeptide reads, in one-letter code: Phytochrome B (1171 aa).

The span at 1 to 19 (MASGSRATPTRSPSSARPA) shows a compositional bias: low complexity. A disordered region spans residues 1-53 (MASGSRATPTRSPSSARPAAPRHQHHHSQSSGGSTSRAGGGGGGGGGGGGGAA). Residues 38-52 (AGGGGGGGGGGGGGA) are compositionally biased toward gly residues. One can recognise a GAF domain in the interval 259–442 (DVKLLCDTVV…AFGLQLNMEL (184 aa)). Residue Cys-364 coordinates phytochromobilin. PAS domains are found at residues 661–732 (VARE…LRGD) and 795–866 (DYKA…MIVL). The 219-residue stretch at 943 to 1161 (YIYQEIKNPL…FFHIVLELPQ (219 aa)) folds into the Histidine kinase domain.

This sequence belongs to the phytochrome family. Homodimer. In terms of processing, contains one covalently linked phytochromobilin chromophore.

Regulatory photoreceptor which exists in two forms that are reversibly interconvertible by light: the Pr form that absorbs maximally in the red region of the spectrum and the Pfr form that absorbs maximally in the far-red region. Photoconversion of Pr to Pfr induces an array of morphogenic responses, whereas reconversion of Pfr to Pr cancels the induction of those responses. Pfr controls the expression of a number of nuclear genes including those encoding the small subunit of ribulose-bisphosphate carboxylase, chlorophyll A/B binding protein, protochlorophyllide reductase, rRNA, etc. It also controls the expression of its own gene(s) in a negative feedback fashion. The protein is Phytochrome B (PHYB) of Oryza sativa subsp. indica (Rice).